A 620-amino-acid polypeptide reads, in one-letter code: Acetylcholinesterase 1 (620 aa).

The signal sequence occupies residues 1 to 31 (MRNSLLFFIFLPSTILAVDLIHLHDGSPLFG). An N-linked (GlcNAc...) asparagine glycan is attached at N74. A disulfide bridge connects residues C82 and C109. Catalysis depends on S216, which acts as the Acyl-ester intermediate. C270 and C286 are oxidised to a cystine. The N-linked (GlcNAc...) asparagine glycan is linked to N272. Residues E346 and H468 each act as charge relay system in the active site. A disulfide bridge connects residues C430 and C558. Residues N486 and N536 are each glycosylated (N-linked (GlcNAc...) asparagine).

This sequence belongs to the type-B carboxylesterase/lipase family. In terms of assembly, oligomer composed of disulfide-linked homodimers.

The protein resides in the synapse. It is found in the secreted. Its subcellular location is the cell membrane. It carries out the reaction acetylcholine + H2O = choline + acetate + H(+). Rapidly hydrolyzes acetylcholine and releases choline into the synapse. It can hydrolyze propionylcholine and butyrylthiocholine in vitro. The protein is Acetylcholinesterase 1 (ace-1) of Caenorhabditis elegans.